Reading from the N-terminus, the 90-residue chain is Small ribosomal subunit protein bS18A (90 aa).

This sequence belongs to the bacterial ribosomal protein bS18 family. Part of the 30S ribosomal subunit. Forms a tight heterodimer with protein bS6.

Its function is as follows. Binds as a heterodimer with protein bS6 to the central domain of the 16S rRNA, where it helps stabilize the platform of the 30S subunit. The sequence is that of Small ribosomal subunit protein bS18A from Roseiflexus castenholzii (strain DSM 13941 / HLO8).